The primary structure comprises 1328 residues: MGIPKFFRWMSERYPLCSQLIENDRIPEFDNLYLDMNGILHNCTHKNDDHSSPPLPEEEMYIAIFNYIEHLFEKIKPKKLLYMAVDGCAPRAKMNQQRSRRFRTAKDAHDARLKAERNGEDFPEEQFDSNCITPGTTFMERVSRQLYYFIHKKVTNDSQWQNIEVIFSGHDCPGEGEHKIMEYIRTQKAQPSYNPNTRHCLYGLDADLIMLGLLSHDPHFCLLREEVTFGPASRNRSKELAHQKFYLLHLSLLREYLEFEFQECRSTFTFKYDLEKILDDFILLAFFVGNDFLPHLPGLHINEGALALMFSIYKKVMPSAGGYINEKGVINMARLELILLELENFEKEIFKAEVSETKNNGNSDKPSFDFLKYITESTNDIKAMTGEQKNYFLQIKKFLSSREPFIDFSANISSVDQRFLRRLCNDLHLSFSKIIKVDGTHLLRITFRDLEFNDEDEDEIEQDEIERVLQKYDNIPLLNEEQALKEKNVEKDFIQWKDDYYRSKVGFSYYDEEALKAMAERYVEGLQWVLFYYYRGCQSWGWYYNYHFAPKISDVLKGLDVKIDFKMGTPFRPFEQLMAVLPARSQALVPPCFRDLMVNSESPIIDFYPENFALDQNGKTASWEAVVIIPFIDETRLIDALASKDKFLTEEERKRNSFNAPTVFSLAEDYTSFYPSSLPSLFPDLVTRCIQKPYSLPSMEGKEYLVGLCPGVFLGAFGMVGFPSFHTLKHKAELVYHGINVFGNESRNPSVIVNVEDVKSALTSEQIAMQYVGKRIFVDWPYLREAYVESAMDESYMYLASNSTIEKRDLAEIEKSQWGRKCSHKIREYSKRFGVLFGDISLLLQVRPIKGLEYTREGALVKIFNESVLEDYPAQLVVEKIAIDDPRFTEREAPPVEVEYPPGTKAFHLGEYNYGRPAQITGCKDNKLIIWLSTAPGLDAQWGRVLVNDSKSKEKYYPSYIVAKLLNIHPLLLSKITSSFLISNGTKRENIGLNLKFDARNQKVLGFSRKSTKGWEFSNKTVALVKEYINTFPQLFNILTTHATKDNLTVKDCFPKDDTQQLAAVKHWIKEKGINSLTRVSLDEDALDSDIIKLIEEKASTIDSTYQVPKKVFGVPRYALLKPSQTRGILHSQEFALGDRVVYVQDSGKVPIAAYGTVVGIMLHHLDVVFDLPFMSGTTLDGRCSPYHGMQVEVSMVLNVTNPQFVVNTRAGKNRKTNVSANNVSQGTDSRLVTKPTSTFPSPPSPPSSSVWNKREHHPKPFSLHQVPPPESLIHKSKSKFSKGNHHSTNGTQSIRGRGGKRGKPLRSKELNRKHDHIVQPMGKLQIN.

The segment at 1211-1328 (AGKNRKTNVS…VQPMGKLQIN (118 aa)) is disordered. The segment covering 1217 to 1231 (TNVSANNVSQGTDSR) has biased composition (polar residues). The span at 1275–1286 (HKSKSKFSKGNH) shows a compositional bias: basic residues.

The protein belongs to the 5'-3' exonuclease family. As to quaternary structure, monomer. Mg(2+) serves as cofactor.

It is found in the cytoplasm. The protein localises to the perinuclear region. Its subcellular location is the P-body. Strand exchange activity is enhanced by fatty acid synthase (stimulatory factor P190/210). Functionally, multifunctional protein that exhibits several independent functions at different levels of the cellular processes. 5'-3' exonuclease component of the nonsense-mediated mRNA decay (NMD) which is a highly conserved mRNA degradation pathway, an RNA surveillance system whose role is to identify and rid cells of mRNA with premature termination codons and thus prevents accumulation of potentially harmful truncated proteins. Involved in the degradation of several hypomodified mature tRNA species and participates in the 5'-processing or the degradation of the snoRNA precursors and rRNA processing. This is 5'-3' exoribonuclease 1 (exo2) from Schizosaccharomyces pombe (strain 972 / ATCC 24843) (Fission yeast).